We begin with the raw amino-acid sequence, 402 residues long: Nodulation protein E (402 aa).

The 400-residue stretch at 2–401 (DRRVVITGMG…GTNAVLAFKQ (400 aa)) folds into the Ketosynthase family 3 (KS3) domain. Active-site for beta-ketoacyl synthase activity residues include Cys162, His294, and His331. Residues 329–348 (HAHCIGAASALEMIACVMAI) traverse the membrane as a helical segment.

Belongs to the thiolase-like superfamily. Beta-ketoacyl-ACP synthases family.

Its subcellular location is the cell inner membrane. Functionally, proposed to synthesize NOD factor fatty acyl chain. Involved in the synthesis of a highly unsaturated fatty acid moiety, which forms part of a lipo-oligosaccharide that is responsible for host specificity. The chain is Nodulation protein E (nodE) from Rhizobium meliloti (strain 1021) (Ensifer meliloti).